Consider the following 238-residue polypeptide: ATP synthase subunit a (238 aa).

A run of 5 helical transmembrane segments spans residues 16 to 36 (LIWLSMPLWLLSSMVPMTVLF), 79 to 99 (GLFMMILMLNLSGNFPFFFPV), 103 to 123 (FVFGFSFALSIWTCLVLSSLL), 129 to 149 (GLMSLVPTGCPLILVPFMVVV), and 209 to 229 (VFGAAEVAIACIQCYIFCVLL).

Belongs to the ATPase A chain family. F-type ATPases have 2 components, CF(1) - the catalytic core - and CF(0) - the membrane proton channel. CF(1) has five subunits: alpha(3), beta(3), gamma(1), delta(1), epsilon(1). CF(0) has three main subunits: a, b and c.

It localises to the mitochondrion inner membrane. Functionally, mitochondrial membrane ATP synthase (F(1)F(0) ATP synthase or Complex V) produces ATP from ADP in the presence of a proton gradient across the membrane which is generated by electron transport complexes of the respiratory chain. F-type ATPases consist of two structural domains, F(1) - containing the extramembraneous catalytic core and F(0) - containing the membrane proton channel, linked together by a central stalk and a peripheral stalk. During catalysis, ATP synthesis in the catalytic domain of F(1) is coupled via a rotary mechanism of the central stalk subunits to proton translocation. Key component of the proton channel; it may play a direct role in the translocation of protons across the membrane. The protein is ATP synthase subunit a (ATP6) of Mytilus edulis (Blue mussel).